We begin with the raw amino-acid sequence, 399 residues long: Mannan endo-1,4-beta-mannosidase 4 (399 aa).

An N-terminal signal peptide occupies residues 1–26; that stretch reads MNNSIILIFVAILIIFPNEFSKPTRA. Positions 88 and 203 each coordinate substrate. Glu-204 (proton donor) is an active-site residue. Tyr-279 is a binding site for substrate. Residue Glu-318 is the Nucleophile of the active site. Cys-347 and Cys-354 form a disulfide bridge. Trp-360 serves as a coordination point for substrate.

It belongs to the glycosyl hydrolase 5 (cellulase A) family. As to expression, expressed in flowers and fruit pericarp.

Its subcellular location is the secreted. It catalyses the reaction Random hydrolysis of (1-&gt;4)-beta-D-mannosidic linkages in mannans, galactomannans and glucomannans.. Its function is as follows. Possesses endo-beta-mannanase and mannan transglycosylase activities. May be involved in cell wall degradation during fruit ripening. The protein is Mannan endo-1,4-beta-mannosidase 4 (MAN4) of Solanum lycopersicum (Tomato).